Here is a 194-residue protein sequence, read N- to C-terminus: MTAIKLIVGLGNPGTEYEQTRHNAGALFVERIAEKQGINLVADRKYFGLTGRFSHQGQDIRLLIPTTYMNRSGQAVAALAGFFRIKPEEILVAHDELDLPPGVAKLKTGGGHGGHNGLRDIIAQLGNQNTFHRLRLGIGHPGVASMVSNFVLGRAPRAEQEKLDASIDFALGVLPDIFAGEWNRAMKNLHSQKA.

Tyr17 provides a ligand contact to tRNA. Residue His22 is the Proton acceptor of the active site. TRNA-binding residues include Tyr68, Asn70, and Asn116.

This sequence belongs to the PTH family. As to quaternary structure, monomer.

It localises to the cytoplasm. The catalysed reaction is an N-acyl-L-alpha-aminoacyl-tRNA + H2O = an N-acyl-L-amino acid + a tRNA + H(+). Hydrolyzes ribosome-free peptidyl-tRNAs (with 1 or more amino acids incorporated), which drop off the ribosome during protein synthesis, or as a result of ribosome stalling. Functionally, catalyzes the release of premature peptidyl moieties from peptidyl-tRNA molecules trapped in stalled 50S ribosomal subunits, and thus maintains levels of free tRNAs and 50S ribosomes. This chain is Peptidyl-tRNA hydrolase, found in Pseudomonas fluorescens (strain ATCC BAA-477 / NRRL B-23932 / Pf-5).